The chain runs to 356 residues: UDP-N-acetylglucosamine--N-acetylmuramyl-(pentapeptide) pyrophosphoryl-undecaprenol N-acetylglucosamine transferase (356 aa).

UDP-N-acetyl-alpha-D-glucosamine contacts are provided by residues 15–17, N127, R163, S191, I244, 263–268, and Q288; these read TGG and ALTVSE.

This sequence belongs to the glycosyltransferase 28 family. MurG subfamily.

It localises to the cell inner membrane. It catalyses the reaction di-trans,octa-cis-undecaprenyl diphospho-N-acetyl-alpha-D-muramoyl-L-alanyl-D-glutamyl-meso-2,6-diaminopimeloyl-D-alanyl-D-alanine + UDP-N-acetyl-alpha-D-glucosamine = di-trans,octa-cis-undecaprenyl diphospho-[N-acetyl-alpha-D-glucosaminyl-(1-&gt;4)]-N-acetyl-alpha-D-muramoyl-L-alanyl-D-glutamyl-meso-2,6-diaminopimeloyl-D-alanyl-D-alanine + UDP + H(+). It functions in the pathway cell wall biogenesis; peptidoglycan biosynthesis. Its function is as follows. Cell wall formation. Catalyzes the transfer of a GlcNAc subunit on undecaprenyl-pyrophosphoryl-MurNAc-pentapeptide (lipid intermediate I) to form undecaprenyl-pyrophosphoryl-MurNAc-(pentapeptide)GlcNAc (lipid intermediate II). This Klebsiella pneumoniae (strain 342) protein is UDP-N-acetylglucosamine--N-acetylmuramyl-(pentapeptide) pyrophosphoryl-undecaprenol N-acetylglucosamine transferase.